Consider the following 337-residue polypeptide: Phosphate acyltransferase (337 aa).

This sequence belongs to the PlsX family. In terms of assembly, homodimer. Probably interacts with PlsY.

The protein resides in the cytoplasm. It catalyses the reaction a fatty acyl-[ACP] + phosphate = an acyl phosphate + holo-[ACP]. The protein operates within lipid metabolism; phospholipid metabolism. Catalyzes the reversible formation of acyl-phosphate (acyl-PO(4)) from acyl-[acyl-carrier-protein] (acyl-ACP). This enzyme utilizes acyl-ACP as fatty acyl donor, but not acyl-CoA. This is Phosphate acyltransferase from Ehrlichia chaffeensis (strain ATCC CRL-10679 / Arkansas).